Reading from the N-terminus, the 161-residue chain is Protein-export protein SecB (161 aa).

This sequence belongs to the SecB family. As to quaternary structure, homotetramer, a dimer of dimers. One homotetramer interacts with 1 SecA dimer.

The protein resides in the cytoplasm. One of the proteins required for the normal export of preproteins out of the cell cytoplasm. It is a molecular chaperone that binds to a subset of precursor proteins, maintaining them in a translocation-competent state. It also specifically binds to its receptor SecA. The protein is Protein-export protein SecB of Methylocella silvestris (strain DSM 15510 / CIP 108128 / LMG 27833 / NCIMB 13906 / BL2).